We begin with the raw amino-acid sequence, 498 residues long: ATP synthase subunit beta, chloroplastic (498 aa).

172-179 (GGAGVGKT) is a binding site for ATP.

The protein belongs to the ATPase alpha/beta chains family. In terms of assembly, F-type ATPases have 2 components, CF(1) - the catalytic core - and CF(0) - the membrane proton channel. CF(1) has five subunits: alpha(3), beta(3), gamma(1), delta(1), epsilon(1). CF(0) has four main subunits: a(1), b(1), b'(1) and c(9-12).

The protein localises to the plastid. Its subcellular location is the chloroplast thylakoid membrane. The enzyme catalyses ATP + H2O + 4 H(+)(in) = ADP + phosphate + 5 H(+)(out). Its function is as follows. Produces ATP from ADP in the presence of a proton gradient across the membrane. The catalytic sites are hosted primarily by the beta subunits. This chain is ATP synthase subunit beta, chloroplastic, found in Coffea arabica (Arabian coffee).